We begin with the raw amino-acid sequence, 646 residues long: Threonine--tRNA ligase (646 aa).

A TGS domain is found at 1 to 63 (MAQISLTFPD…EADAKIAIHT (63 aa)). The catalytic stretch occupies residues 247 to 544 (DHRKLGKEME…LIENYAGKLP (298 aa)). Zn(2+) is bound by residues C344, H395, and H521.

This sequence belongs to the class-II aminoacyl-tRNA synthetase family. As to quaternary structure, homodimer. The cofactor is Zn(2+).

The protein localises to the cytoplasm. The catalysed reaction is tRNA(Thr) + L-threonine + ATP = L-threonyl-tRNA(Thr) + AMP + diphosphate + H(+). In terms of biological role, catalyzes the attachment of threonine to tRNA(Thr) in a two-step reaction: L-threonine is first activated by ATP to form Thr-AMP and then transferred to the acceptor end of tRNA(Thr). Also edits incorrectly charged L-seryl-tRNA(Thr). This chain is Threonine--tRNA ligase, found in Cereibacter sphaeroides (strain ATCC 17025 / ATH 2.4.3) (Rhodobacter sphaeroides).